Reading from the N-terminus, the 179-residue chain is Large ribosomal subunit protein uL16 (179 aa).

A disordered region spans residues 147–179 (KASSASLANLDEDANSQTDDETSSSGSVATVES). Positions 156–168 (LDEDANSQTDDET) are enriched in acidic residues. Over residues 169 to 179 (SSSGSVATVES) the composition is skewed to polar residues.

The protein belongs to the universal ribosomal protein uL16 family. In terms of assembly, part of the 50S ribosomal subunit.

Binds 23S rRNA and is also seen to make contacts with the A and possibly P site tRNAs. The chain is Large ribosomal subunit protein uL16 from Prochlorococcus marinus (strain MIT 9211).